Here is a 308-residue protein sequence, read N- to C-terminus: Neurexophilin-4 (308 aa).

The N-terminal stretch at 1–23 (MRLLPEWFLLLFGPWLLRKAVSA) is a signal peptide. The segment at 24 to 84 (QIPESGRPQY…GALARAGAAG (61 aa)) is II. Low complexity predominate over residues 40-51 (AAGAGAPGQQLP). The disordered stretch occupies residues 40–59 (AAGAGAPGQQLPEPRSSDGL). Residues N72, N133, N143, and N149 are each glycosylated (N-linked (GlcNAc...) asparagine). Residues 85–163 (ALPAQRTKRK…IVPPSKRVEF (79 aa)) are III. Residues 164 to 224 (GGVWLPGPVP…PLGGALGVPG (61 aa)) form an IV (linker domain) region. The v (Cys-rich) stretch occupies residues 225-308 (AKESRAFNCH…NFQSEHPYFG (84 aa)).

The protein belongs to the neurexophilin family. In terms of processing, may be proteolytically processed at the boundary between the N-terminal non-conserved and the central conserved domain in neuron-like cells. As to expression, expressed in brain, spleen, and testis.

It is found in the secreted. In terms of biological role, may be signaling molecules that resemble neuropeptides and that act by binding to alpha-neurexins and possibly other receptors. This is Neurexophilin-4 (NXPH4) from Homo sapiens (Human).